Here is a 367-residue protein sequence, read N- to C-terminus: tRNA (guanine(26)-N(2))-dimethyltransferase (367 aa).

The region spanning 1 to 365 (MRVSEGRVTV…ADVVEIREAT (365 aa)) is the Trm1 methyltransferase domain. 5 residues coordinate S-adenosyl-L-methionine: R34, R64, D79, D105, and A106. Zn(2+)-binding residues include C234, C237, C254, and C257.

Belongs to the class I-like SAM-binding methyltransferase superfamily. Trm1 family.

The catalysed reaction is guanosine(26) in tRNA + 2 S-adenosyl-L-methionine = N(2)-dimethylguanosine(26) in tRNA + 2 S-adenosyl-L-homocysteine + 2 H(+). Its function is as follows. Dimethylates a single guanine residue at position 26 of a number of tRNAs using S-adenosyl-L-methionine as donor of the methyl groups. The protein is tRNA (guanine(26)-N(2))-dimethyltransferase of Haloarcula marismortui (strain ATCC 43049 / DSM 3752 / JCM 8966 / VKM B-1809) (Halobacterium marismortui).